A 467-amino-acid polypeptide reads, in one-letter code: Cysteine--tRNA ligase (467 aa).

Zn(2+) is bound at residue C29. The 'HIGH' region signature appears at 31-41 (PTVYNYVHIGN). Zn(2+)-binding residues include C209, H234, and E238. Residues 267–271 (KMSKS) carry the 'KMSKS' region motif. K270 provides a ligand contact to ATP.

Belongs to the class-I aminoacyl-tRNA synthetase family. Monomer. The cofactor is Zn(2+).

The protein resides in the cytoplasm. The enzyme catalyses tRNA(Cys) + L-cysteine + ATP = L-cysteinyl-tRNA(Cys) + AMP + diphosphate. This is Cysteine--tRNA ligase from Xylella fastidiosa (strain Temecula1 / ATCC 700964).